Here is a 1262-residue protein sequence, read N- to C-terminus: Collagen alpha-1(III) chain (1262 aa).

The first 23 residues, Met-1–Ala-23, serve as a signal peptide directing secretion. The propeptide at Gln-24–Pro-150 is N-terminal propeptide. The VWFC domain maps to Gly-29–Pro-88. Disordered stretches follow at residues Thr-95–Ile-143 and Gly-160–Ala-1000. The segment covering Gly-102 to Ala-118 has biased composition (low complexity). The span at Pro-119–Pro-134 shows a compositional bias: pro residues. The interval Gly-145–Met-164 is nonhelical region (N-terminal). A triple-helical region region spans residues Gly-165 to Cys-994. The span at Pro-167–Ala-190 shows a compositional bias: pro residues. The span at Pro-192–Pro-201 shows a compositional bias: low complexity. Residues Pro-202–Pro-216 are compositionally biased toward pro residues. Over residues Lys-228–Asp-240 the composition is skewed to basic and acidic residues. The span at Pro-253–Ala-264 shows a compositional bias: low complexity. Lys-262 is modified (5-hydroxylysine). Residues Arg-265–Lys-274 are compositionally biased toward basic and acidic residues. Low complexity-rich tracts occupy residues Asp-276–Pro-295 and Thr-339–Ala-376. Lys-283 bears the 5-hydroxylysine mark. Gly residues predominate over residues Gly-389–Leu-414. Composition is skewed to low complexity over residues Met-534 to Lys-549 and Pro-631 to Gln-640. The segment covering Gly-641 to Gly-650 has biased composition (gly residues). Residues Pro-672 to Pro-684 are compositionally biased toward low complexity. Positions Gly-692–Gly-701 are enriched in gly residues. Composition is skewed to low complexity over residues Leu-723–Pro-738, Thr-781–Ala-790, Gln-802–Asn-817, and Pro-828–Pro-838. Lys-859 carries the post-translational modification 5-hydroxylysine. A compositionally biased stretch (gly residues) spans Gly-863–Gly-872. The segment covering Pro-895 to Pro-904 has biased composition (pro residues). The span at Pro-927–Arg-940 shows a compositional bias: low complexity. Over residues Ala-976–Pro-993 the composition is skewed to pro residues. A nonhelical region (C-terminal) region spans residues Cys-995–Gly-1003. Residues Asp-1018–Leu-1262 constitute a propeptide, C-terminal propeptide. In terms of domain architecture, Fibrillar collagen NC1 spans Gly-1028 to Leu-1262. 3 cysteine pairs are disulfide-bonded: Cys-1058–Cys-1090, Cys-1098–Cys-1260, and Cys-1168–Cys-1213. Residues Asp-1076, Asn-1078, Gln-1079, Cys-1081, and Asp-1084 each coordinate Ca(2+). Asn-1163 carries N-linked (GlcNAc...) asparagine glycosylation.

This sequence belongs to the fibrillar collagen family. Trimers of identical alpha 1(III) chains. The chains are linked to each other by interchain disulfide bonds. Trimers are also cross-linked via hydroxylysines. Post-translationally, prolines at the third position of the tripeptide repeating unit (G-X-Y) are hydroxylated in some or all of the chains.

It is found in the secreted. The protein resides in the extracellular space. Its subcellular location is the extracellular matrix. In terms of biological role, collagen type III occurs in most soft connective tissues along with type I collagen. The chain is Collagen alpha-1(III) chain (COL3A1) from Gallus gallus (Chicken).